Consider the following 211-residue polypeptide: Urease accessory protein UreG (211 aa).

Residue Gly-11 to Thr-18 participates in GTP binding.

The protein belongs to the SIMIBI class G3E GTPase family. UreG subfamily. Homodimer. UreD, UreF and UreG form a complex that acts as a GTP-hydrolysis-dependent molecular chaperone, activating the urease apoprotein by helping to assemble the nickel containing metallocenter of UreC. The UreE protein probably delivers the nickel.

It is found in the cytoplasm. Facilitates the functional incorporation of the urease nickel metallocenter. This process requires GTP hydrolysis, probably effectuated by UreG. The polypeptide is Urease accessory protein UreG (Actinobacillus pleuropneumoniae serotype 3 (strain JL03)).